The sequence spans 407 residues: Probable tRNA sulfurtransferase (407 aa).

The region spanning 61–165 (NEITYRLSKI…LDAIYMYEEV (105 aa)) is the THUMP domain. ATP is bound by residues 183 to 184 (ML), 208 to 209 (HF), Arg-265, Gly-287, and Gln-296.

It belongs to the ThiI family.

It localises to the cytoplasm. It carries out the reaction [ThiI sulfur-carrier protein]-S-sulfanyl-L-cysteine + a uridine in tRNA + 2 reduced [2Fe-2S]-[ferredoxin] + ATP + H(+) = [ThiI sulfur-carrier protein]-L-cysteine + a 4-thiouridine in tRNA + 2 oxidized [2Fe-2S]-[ferredoxin] + AMP + diphosphate. The catalysed reaction is [ThiS sulfur-carrier protein]-C-terminal Gly-Gly-AMP + S-sulfanyl-L-cysteinyl-[cysteine desulfurase] + AH2 = [ThiS sulfur-carrier protein]-C-terminal-Gly-aminoethanethioate + L-cysteinyl-[cysteine desulfurase] + A + AMP + 2 H(+). It functions in the pathway cofactor biosynthesis; thiamine diphosphate biosynthesis. Catalyzes the ATP-dependent transfer of a sulfur to tRNA to produce 4-thiouridine in position 8 of tRNAs, which functions as a near-UV photosensor. Also catalyzes the transfer of sulfur to the sulfur carrier protein ThiS, forming ThiS-thiocarboxylate. This is a step in the synthesis of thiazole, in the thiamine biosynthesis pathway. The sulfur is donated as persulfide by IscS. In Staphylococcus aureus (strain bovine RF122 / ET3-1), this protein is Probable tRNA sulfurtransferase.